Reading from the N-terminus, the 149-residue chain is 3-dehydroquinate dehydratase (149 aa).

Residue Tyr23 is the Proton acceptor of the active site. Substrate is bound by residues Asn75, His81, and Asp88. His101 functions as the Proton donor in the catalytic mechanism. Residues 102 to 103 and Arg112 each bind substrate; that span reads LS.

The protein belongs to the type-II 3-dehydroquinase family. In terms of assembly, homododecamer.

The enzyme catalyses 3-dehydroquinate = 3-dehydroshikimate + H2O. The protein operates within metabolic intermediate biosynthesis; chorismate biosynthesis; chorismate from D-erythrose 4-phosphate and phosphoenolpyruvate: step 3/7. Catalyzes a trans-dehydration via an enolate intermediate. This Stenotrophomonas maltophilia (strain R551-3) protein is 3-dehydroquinate dehydratase.